The sequence spans 487 residues: Glutamyl-tRNA(Gln) amidotransferase subunit A (487 aa).

Active-site charge relay system residues include Lys-79 and Ser-154. Catalysis depends on Ser-178, which acts as the Acyl-ester intermediate.

This sequence belongs to the amidase family. GatA subfamily. As to quaternary structure, heterotrimer of A, B and C subunits.

The enzyme catalyses L-glutamyl-tRNA(Gln) + L-glutamine + ATP + H2O = L-glutaminyl-tRNA(Gln) + L-glutamate + ADP + phosphate + H(+). In terms of biological role, allows the formation of correctly charged Gln-tRNA(Gln) through the transamidation of misacylated Glu-tRNA(Gln) in organisms which lack glutaminyl-tRNA synthetase. The reaction takes place in the presence of glutamine and ATP through an activated gamma-phospho-Glu-tRNA(Gln). The protein is Glutamyl-tRNA(Gln) amidotransferase subunit A of Heliobacterium modesticaldum (strain ATCC 51547 / Ice1).